The primary structure comprises 125 residues: Lymphocyte antigen 6 complex locus protein G6c (125 aa).

The first 18 residues, 1–18, serve as a signal peptide directing secretion; sequence MKALMLLTLSVLLCWVSA. A UPAR/Ly6 domain is found at 20 to 111; it reads IRCHSCYKVP…PRPTPALGLV (92 aa). 3 disulfide bridges follow: Cys-22–Cys-47, Cys-25–Cys-33, and Cys-39–Cys-65. A glycan (N-linked (GlcNAc...) asparagine) is linked at Asn-88. Cys-92 and Cys-97 are joined by a disulfide. A lipid anchor (GPI-anchor amidated serine) is attached at Ser-99. Residues 100 to 125 constitute a propeptide, removed in mature form; the sequence is AGPRPTPALGLVFLTSLAGLGLWLLH.

As to quaternary structure, monomer. N-glycosylated. As to expression, highly expressed at the leading edges of cells, on filopodia.

Its subcellular location is the cell membrane. The chain is Lymphocyte antigen 6 complex locus protein G6c (LY6G6C) from Homo sapiens (Human).